The chain runs to 197 residues: Casparian strip membrane protein 4 (197 aa).

Over 1–34 (MMSSTTIDVPAESSNVAKGKAVLVAAPRPGGWKK) the chain is Cytoplasmic. A helical membrane pass occupies residues 35–55 (GIAIVDFVLRLGAVAAALGAA). Residues 56–85 (TTMATADQTLPFFTQFFQFEASYDSFTTFQ) lie on the Extracellular side of the membrane. The helical transmembrane segment at 86-106 (FFVITMALVGCYLVLSLPLSI) threads the bilayer. Over 107–118 (VSIIRPHALGPK) the chain is Cytoplasmic. The helical transmembrane segment at 119–139 (LFLIILDTVFLTLATASAASA) threads the bilayer. Over 140–171 (AAVVYVAHNGNQDSNWLAICNQFGDFCAQTSG) the chain is Extracellular. Residues 172-192 (AVVSSLVAVVVFVLLIVMSAL) form a helical membrane-spanning segment. Residues 193 to 197 (ALGKH) lie on the Cytoplasmic side of the membrane.

The protein belongs to the Casparian strip membrane proteins (CASP) family. Homodimer and heterodimers.

The protein resides in the cell membrane. Regulates membrane-cell wall junctions and localized cell wall deposition. Required for establishment of the Casparian strip membrane domain (CSD) and the subsequent formation of Casparian strips, a cell wall modification of the root endodermis that determines an apoplastic barrier between the intraorganismal apoplasm and the extraorganismal apoplasm and prevents lateral diffusion. The protein is Casparian strip membrane protein 4 of Lotus japonicus (Lotus corniculatus var. japonicus).